Consider the following 431-residue polypeptide: Divalent metal cation transporter MntH (431 aa).

11 consecutive transmembrane segments (helical) span residues 33–53 (LLKFLGPAFVVSVAYIDPGNF), 61–81 (SSFNYNLIWVILWSNLMAIFL), 110–130 (WIFWIVGELGAMATDLAEFIG), 141–161 (IPMIYAGLLTGVLTFIIVYME), 170–190 (TIIAALIAVICVAYTIELFLA), 211–231 (AVLIAVGMLGATVMPHVIYLH), 258–278 (ILIAMNIAFVVNAAMVIVSAA), 307–327 (GAFGIALLASGLSSSAVGTMA), 347–367 (IITMLPALIIIALGINPMRVL), 368–388 (VLSQVALSFILPFPIIQMLLI), and 406–426 (IVGFIIATMIILLNIILLYLT).

This sequence belongs to the NRAMP family.

The protein localises to the cell membrane. Its function is as follows. H(+)-stimulated, divalent metal cation uptake system. This is Divalent metal cation transporter MntH from Clostridium acetobutylicum (strain ATCC 824 / DSM 792 / JCM 1419 / IAM 19013 / LMG 5710 / NBRC 13948 / NRRL B-527 / VKM B-1787 / 2291 / W).